Here is a 152-residue protein sequence, read N- to C-terminus: Protein-export protein SecB (152 aa).

The protein belongs to the SecB family. Homotetramer, a dimer of dimers. One homotetramer interacts with 1 SecA dimer.

The protein localises to the cytoplasm. One of the proteins required for the normal export of preproteins out of the cell cytoplasm. It is a molecular chaperone that binds to a subset of precursor proteins, maintaining them in a translocation-competent state. It also specifically binds to its receptor SecA. This Rickettsia felis (strain ATCC VR-1525 / URRWXCal2) (Rickettsia azadi) protein is Protein-export protein SecB.